The chain runs to 329 residues: Glycerol-3-phosphate dehydrogenase [NAD(P)+] (329 aa).

NADPH is bound by residues W15, H35, and K107. The sn-glycerol 3-phosphate site is built by K107, G135, and S137. A139 is a binding site for NADPH. K190, D243, S253, R254, and N255 together coordinate sn-glycerol 3-phosphate. K190 (proton acceptor) is an active-site residue. R254 contributes to the NADPH binding site. The NADPH site is built by L276 and E278.

It belongs to the NAD-dependent glycerol-3-phosphate dehydrogenase family.

The protein localises to the cytoplasm. The enzyme catalyses sn-glycerol 3-phosphate + NAD(+) = dihydroxyacetone phosphate + NADH + H(+). It carries out the reaction sn-glycerol 3-phosphate + NADP(+) = dihydroxyacetone phosphate + NADPH + H(+). Its pathway is membrane lipid metabolism; glycerophospholipid metabolism. Its function is as follows. Catalyzes the reduction of the glycolytic intermediate dihydroxyacetone phosphate (DHAP) to sn-glycerol 3-phosphate (G3P), the key precursor for phospholipid synthesis. This Rhodopseudomonas palustris (strain BisB5) protein is Glycerol-3-phosphate dehydrogenase [NAD(P)+].